The chain runs to 256 residues: MNTSSRITYFIIGGSRGIGFNLVKILSASTGNTVITSIRGSPSLPKNKQVEDLAKIRKNIHIVQLDLTKDESIGNIADEIKKTPFFLGIDIFIACSAVSDSYYKVLETPKSVWLNHYSTNALGPILALQKVYPLLLLKKTRKIFFISSVAGSINAFVPLSVSAYGQSKAALNYAVKTLSFELKPEGFTVVAFHPGMVSTDMGQYGLDHFKEKNIDISGVNIITPEESASALIDVFRKILPEDNGKFFNYDGSEGVF.

NADP(+)-binding residues include isoleucine 18, serine 37, lysine 46, aspartate 66, tyrosine 164, lysine 168, valine 197, and threonine 199. Residue tyrosine 164 is the Proton donor of the active site. Lysine 168 functions as the Lowers pKa of active site Tyr in the catalytic mechanism.

It belongs to the short-chain dehydrogenases/reductases (SDR) family.

The protein localises to the cytoplasm. This is an uncharacterized protein from Saccharomyces cerevisiae (strain ATCC 204508 / S288c) (Baker's yeast).